The following is a 374-amino-acid chain: UPF0754 membrane protein SA1664 (374 aa).

A run of 2 helical transmembrane segments spans residues 4–24 (LFII…TNVI) and 354–374 (SLGF…AIFV).

The protein belongs to the UPF0754 family.

The protein localises to the cell membrane. In Staphylococcus aureus (strain N315), this protein is UPF0754 membrane protein SA1664.